The sequence spans 162 residues: UPF0262 protein Acry_0160 (162 aa).

The protein belongs to the UPF0262 family.

In Acidiphilium cryptum (strain JF-5), this protein is UPF0262 protein Acry_0160.